Consider the following 192-residue polypeptide: 21.7 kDa class VI heat shock protein (192 aa).

A sHSP domain is found at 80-192; it reads SLRSLGQCRV…IPKINSKNKF (113 aa).

It belongs to the small heat shock protein (HSP20) family. As to quaternary structure, may form oligomeric structures.

The protein resides in the cytoplasm. The sequence is that of 21.7 kDa class VI heat shock protein (HSP21.7) from Arabidopsis thaliana (Mouse-ear cress).